We begin with the raw amino-acid sequence, 310 residues long: Cysteine synthase (310 aa).

N6-(pyridoxal phosphate)lysine is present on K46. Pyridoxal 5'-phosphate contacts are provided by residues N76, 180–184, and S268; that span reads GTGGT.

This sequence belongs to the cysteine synthase/cystathionine beta-synthase family. Homodimer. It depends on pyridoxal 5'-phosphate as a cofactor.

It catalyses the reaction O-acetyl-L-serine + hydrogen sulfide = L-cysteine + acetate. Its pathway is amino-acid biosynthesis; L-cysteine biosynthesis; L-cysteine from L-serine: step 2/2. The chain is Cysteine synthase (cysK) from Staphylococcus epidermidis (strain ATCC 35984 / DSM 28319 / BCRC 17069 / CCUG 31568 / BM 3577 / RP62A).